Reading from the N-terminus, the 470-residue chain is Argininosuccinate lyase (470 aa).

The protein belongs to the lyase 1 family. Argininosuccinate lyase subfamily.

It localises to the cytoplasm. The enzyme catalyses 2-(N(omega)-L-arginino)succinate = fumarate + L-arginine. The protein operates within amino-acid biosynthesis; L-arginine biosynthesis; L-arginine from L-ornithine and carbamoyl phosphate: step 3/3. In Mycolicibacterium vanbaalenii (strain DSM 7251 / JCM 13017 / BCRC 16820 / KCTC 9966 / NRRL B-24157 / PYR-1) (Mycobacterium vanbaalenii), this protein is Argininosuccinate lyase.